A 410-amino-acid chain; its full sequence is Porin-like protein GalP (410 aa).

The first 25 residues, 1–25 (MKCRTLYPLVPTFALAASLPLQALA), serve as a signal peptide directing secretion.

Belongs to the outer membrane porin (Opr) (TC 1.B.25) family.

Probable transporter, possibly involved in the gallate degradation pathway. May play a role in the uptake of low gallate concentrations that may exist in the natural habitats of P.putida. The protein is Porin-like protein GalP (galP) of Pseudomonas putida (strain ATCC 47054 / DSM 6125 / CFBP 8728 / NCIMB 11950 / KT2440).